Consider the following 472-residue polypeptide: MSAAALKVTTESRPGSRLAVTVTVPAERTKTSYEDAINSLSRSINLPGFRKGKVPRTVVIQQLGAVRIKASALETMVDGAWRDAIQQESLEPISQPELSGGFEGLLDSFTPGEAVTITLEADVAPTPKLKSTKGLKASFEPVAYDAAKVDEMLEDSRKQLATVVPVEGRAAEQGDIAVLGFKGTYSDDGSEIEGGSADSMDVDLEHGRMIPGFIEGVIGMAVGDSKTVDCQFPDDYPKEDARGRKAAFEIELKDLKTRELPELNDAFAKQASEQETLAELRQELEQRLKDDAERRQTSNRRDALIGALVEQLEVELPEALIQQESRNLLEQTAAQFAQQGMDVKSLFTPDLVRNLMQNSRPEAEERLRRSFALTALAEAEGISVEDDAVDAKIKEVKKELAADAKIDPQRLRQAVMDDLIQEQLMSWLEENSTLTEQAPAADDADDAEKPAAKKKPAAKKKTPAKSKTDAEA.

Positions 174-261 (GDIAVLGFKG…LKDLKTRELP (88 aa)) constitute a PPIase FKBP-type domain. The tract at residues 430–472 (ENSTLTEQAPAADDADDAEKPAAKKKPAAKKKTPAKSKTDAEA) is disordered. Residues 452–464 (AKKKPAAKKKTPA) are compositionally biased toward basic residues.

This sequence belongs to the FKBP-type PPIase family. Tig subfamily.

It is found in the cytoplasm. It carries out the reaction [protein]-peptidylproline (omega=180) = [protein]-peptidylproline (omega=0). In terms of biological role, involved in protein export. Acts as a chaperone by maintaining the newly synthesized protein in an open conformation. Functions as a peptidyl-prolyl cis-trans isomerase. This chain is Trigger factor, found in Parasynechococcus marenigrum (strain WH8102).